We begin with the raw amino-acid sequence, 376 residues long: MAINVNTNVSAMTAQRYLNHAAEGQQKSMERLSSGYKINSAKDDAAGLQISNRLNAQSRGLDMAVKNANDGISIAQVAEGAMNESTNILQRMRDLSLQSANGSNSKAERVAIQEEVTALNDELNRIAETTSFGGNKLLNGTYGTQSFQIGADSGEAVMLSMGSLRSDTSAMGGKSYSAEEGKDASWTVGDKTELKMSYTNKQGEEKELTIKAKQGDDIEQLATYINGQSEDVKASVGEDGKLQVFASTQKVNGEVEFSGNLAGEIGFGDAKDVTVKDIDVTTVAGSQEAVAVIDGALKSVDSQRASLGAFQNRFNHAISNLDNINENVNASNSRIKDTDYAKETTAMTKSQILQQASTSILAQAKQSPSAALSLLG.

Coiled-coil stretches lie at residues 103–128 and 310–338; these read SNSKAERVAIQEEVTALNDELNRIAE and FQNRFNHAISNLDNINENVNASNSRIKDT.

The protein belongs to the bacterial flagellin family. In terms of assembly, heteromer of multiple flagellin subunits including FlaA, FlaB/D, FlaC, FlaE and FlaF.

It is found in the secreted. It localises to the bacterial flagellum. Functionally, flagellin is the subunit protein which polymerizes to form the filaments of bacterial flagella. FlaA is not essential for polar flagellar synthesis and swimming motility. Homomer of FlaA is able to form a functional filament. In Vibrio parahaemolyticus serotype O3:K6 (strain RIMD 2210633), this protein is Polar flagellin A (flaA).